Consider the following 122-residue polypeptide: MPPNPTGPTNSQLRMLARFLRKAARANSASIWRVVAEFVEKPRRQRVIVNVGKLNRVAKEGDVVVVPGKLLAGGQLNKKIIVAAVKISPKAARKVIEAGGEVLTIPELVRKYPRGSGVRIVI.

Belongs to the eukaryotic ribosomal protein eL18 family.

This chain is Large ribosomal subunit protein eL18, found in Pyrobaculum aerophilum (strain ATCC 51768 / DSM 7523 / JCM 9630 / CIP 104966 / NBRC 100827 / IM2).